The following is a 110-amino-acid chain: Large ribosomal subunit protein uL22 (110 aa).

The protein belongs to the universal ribosomal protein uL22 family. Part of the 50S ribosomal subunit.

In terms of biological role, this protein binds specifically to 23S rRNA; its binding is stimulated by other ribosomal proteins, e.g. L4, L17, and L20. It is important during the early stages of 50S assembly. It makes multiple contacts with different domains of the 23S rRNA in the assembled 50S subunit and ribosome. Its function is as follows. The globular domain of the protein is located near the polypeptide exit tunnel on the outside of the subunit, while an extended beta-hairpin is found that lines the wall of the exit tunnel in the center of the 70S ribosome. The sequence is that of Large ribosomal subunit protein uL22 from Haemophilus ducreyi (strain 35000HP / ATCC 700724).